Consider the following 391-residue polypeptide: Chaperone protein DnaJ (391 aa).

The J domain occupies 4 to 68 (DFYDVLGVSR…ETRQQYDQLG (65 aa)). The span at 53–79 (DVLTDEETRQQYDQLGHERFEEAEKRG) shows a compositional bias: basic and acidic residues. 2 disordered regions span residues 53-94 (DVLT…MGGA) and 117-136 (FFGG…EQGR). Gly residues-rich tracts occupy residues 81-94 (TGNG…MGGA) and 119-129 (GGAGGGGGRGR). The segment at 152-234 (GVSKQVTVRR…CGGQGQTRER (83 aa)) adopts a CR-type zinc-finger fold. Zn(2+) is bound by residues cysteine 165, cysteine 168, cysteine 182, cysteine 185, cysteine 208, cysteine 211, cysteine 222, and cysteine 225. CXXCXGXG motif repeat units lie at residues 165–172 (CADCGGSG), 182–189 (CPQCDGQG), 208–215 (CSRCGGEG), and 222–229 (CSTCGGQG).

Belongs to the DnaJ family. As to quaternary structure, homodimer. Requires Zn(2+) as cofactor.

It is found in the cytoplasm. Participates actively in the response to hyperosmotic and heat shock by preventing the aggregation of stress-denatured proteins and by disaggregating proteins, also in an autonomous, DnaK-independent fashion. Unfolded proteins bind initially to DnaJ; upon interaction with the DnaJ-bound protein, DnaK hydrolyzes its bound ATP, resulting in the formation of a stable complex. GrpE releases ADP from DnaK; ATP binding to DnaK triggers the release of the substrate protein, thus completing the reaction cycle. Several rounds of ATP-dependent interactions between DnaJ, DnaK and GrpE are required for fully efficient folding. Also involved, together with DnaK and GrpE, in the DNA replication of plasmids through activation of initiation proteins. The polypeptide is Chaperone protein DnaJ (Halobacterium salinarum (strain ATCC 29341 / DSM 671 / R1)).